Here is a 357-residue protein sequence, read N- to C-terminus: Protein phosphatase 1 regulatory subunit 42 (357 aa).

7 LRR repeats span residues lysine 29–arginine 50, asparagine 51–threonine 72, asparagine 73–lysine 94, lysine 95–glutamate 116, glutamate 117–proline 138, serine 147–glutamate 168, and asparagine 169–leucine 190. An LRRCT domain is found at asparagine 204–tryptophan 242. Positions glutamate 329 to glutamate 357 are disordered. A compositionally biased stretch (basic and acidic residues) spans asparagine 335 to glutamate 357.

In terms of assembly, interacts with PPP1CC isoform gamma-2; the interaction is direct. Interacts with actin, dynein, KIF5B, KIFC1 and tubulin. Associates with microtubules. In terms of processing, phosphorylated; during the first round of spermatogenesis with a marginal increase at 21 days after birth. As to expression, testis-specific. Expressed in spermatids (at protein level). Testis-specific.

The protein localises to the cytoplasm. It localises to the cytoskeleton. It is found in the microtubule organizing center. The protein resides in the centrosome. Functionally, regulates phosphatase activity of protein phosphatase 1 (PP1) complexes in the testis. The polypeptide is Protein phosphatase 1 regulatory subunit 42 (Ppp1r42) (Mus musculus (Mouse)).